We begin with the raw amino-acid sequence, 168 residues long: Shikimate kinase (168 aa).

An ATP-binding site is contributed by 12-17 (GAGKST). S16 serves as a coordination point for Mg(2+). D34, R58, and G80 together coordinate substrate. R117 serves as a coordination point for ATP. R136 contributes to the substrate binding site. Residue R153 participates in ATP binding.

The protein belongs to the shikimate kinase family. As to quaternary structure, monomer. Mg(2+) is required as a cofactor.

It is found in the cytoplasm. It catalyses the reaction shikimate + ATP = 3-phosphoshikimate + ADP + H(+). It functions in the pathway metabolic intermediate biosynthesis; chorismate biosynthesis; chorismate from D-erythrose 4-phosphate and phosphoenolpyruvate: step 5/7. Catalyzes the specific phosphorylation of the 3-hydroxyl group of shikimic acid using ATP as a cosubstrate. The chain is Shikimate kinase from Rhodococcus jostii (strain RHA1).